Here is a 348-residue protein sequence, read N- to C-terminus: Sorbitol dehydrogenase (348 aa).

Positions 40, 65, and 66 each coordinate Zn(2+). NAD(+) contacts are provided by residues Ile179, Asp199, Arg204, 269–271 (VGI), and 293–295 (SFR). Residue Arg295 participates in substrate binding.

This sequence belongs to the zinc-containing alcohol dehydrogenase family. As to quaternary structure, homotetramer. Zn(2+) serves as cofactor.

The enzyme catalyses xylitol + NAD(+) = D-xylulose + NADH + H(+). It catalyses the reaction L-iditol + NAD(+) = keto-L-sorbose + NADH + H(+). The catalysed reaction is keto-D-fructose + NADH + H(+) = D-sorbitol + NAD(+). In terms of biological role, polyol dehydrogenase that catalyzes the reversible NAD(+)-dependent oxidation of various sugar alcohols. Is active with xylitol, L-iditol and D-sorbitol (D-glucitol) as substrates, leading to the C2-oxidized products D-xylulose, L-sorbose and D-fructose, respectively. Is a key enzyme in the polyol pathway that interconverts glucose and fructose via sorbitol, which constitutes an important alternate route for glucose metabolism. The protein is Sorbitol dehydrogenase (SDH) of Bombyx mori (Silk moth).